The sequence spans 291 residues: N-acetylmannosamine kinase (291 aa).

ATP is bound by residues 5-12 (AIDIGGTK) and 132-139 (GVGGGVVC). Positions 156, 166, 168, and 173 each coordinate Zn(2+).

Belongs to the ROK (NagC/XylR) family. NanK subfamily. Homodimer.

The enzyme catalyses an N-acyl-D-mannosamine + ATP = an N-acyl-D-mannosamine 6-phosphate + ADP + H(+). It participates in amino-sugar metabolism; N-acetylneuraminate degradation; D-fructose 6-phosphate from N-acetylneuraminate: step 2/5. Catalyzes the phosphorylation of N-acetylmannosamine (ManNAc) to ManNAc-6-P. The sequence is that of N-acetylmannosamine kinase from Salmonella gallinarum (strain 287/91 / NCTC 13346).